A 1579-amino-acid polypeptide reads, in one-letter code: Pentafunctional AROM polypeptide (1579 aa).

The tract at residues 1–391 (MKVELSKVPI…YGTSAHVVSD (391 aa)) is 3-dehydroquinate synthase. NAD(+) contacts are provided by residues 44–46 (DTN), 79–82 (EAHK), 110–112 (GGV), and aspartate 115. Arginine 126 lines the 7-phospho-2-dehydro-3-deoxy-D-arabino-heptonate pocket. 135 to 136 (TS) contacts NAD(+). The 7-phospho-2-dehydro-3-deoxy-D-arabino-heptonate site is built by aspartate 142 and lysine 148. Lysine 157 is a binding site for NAD(+). Asparagine 158 contributes to the 7-phospho-2-dehydro-3-deoxy-D-arabino-heptonate binding site. NAD(+) is bound by residues 175–178 (WLET) and asparagine 186. Residue glutamate 190 participates in Zn(2+) binding. 7-phospho-2-dehydro-3-deoxy-D-arabino-heptonate contacts are provided by residues 190 to 193 (EVIK) and lysine 257. Glutamate 267 acts as the Proton acceptor; for 3-dehydroquinate synthase activity in catalysis. Residues 271 to 275 (RNLLN) and histidine 278 each bind 7-phospho-2-dehydro-3-deoxy-D-arabino-heptonate. Histidine 278 contributes to the Zn(2+) binding site. Histidine 282 acts as the Proton acceptor; for 3-dehydroquinate synthase activity in catalysis. 7-phospho-2-dehydro-3-deoxy-D-arabino-heptonate contacts are provided by histidine 294 and lysine 363. Position 294 (histidine 294) interacts with Zn(2+). Positions 404–862 (VYPFKTLENG…WDVLHTQLGA (459 aa)) are EPSP synthase. The For EPSP synthase activity role is filled by cysteine 844. A shikimate kinase region spans residues 881 to 1070 (SIVIIGMRAA…IPTNRSSFVC (190 aa)). 886–893 (GMRAAGKT) is a binding site for ATP. A 3-dehydroquinase region spans residues 1071–1283 (LTFDDLAAHK…SAPGQLTLSQ (213 aa)). The active-site Proton acceptor; for 3-dehydroquinate dehydratase activity is histidine 1188. Lysine 1217 (schiff-base intermediate with substrate; for 3-dehydroquinate dehydratase activity) is an active-site residue. Residues 1296–1579 (AKNFYVVGSP…IYSAVTEEQA (284 aa)) are shikimate dehydrogenase.

In the N-terminal section; belongs to the sugar phosphate cyclases superfamily. Dehydroquinate synthase family. It in the 2nd section; belongs to the EPSP synthase family. The protein in the 3rd section; belongs to the shikimate kinase family. This sequence in the 4th section; belongs to the type-I 3-dehydroquinase family. In the C-terminal section; belongs to the shikimate dehydrogenase family. Homodimer. Zn(2+) is required as a cofactor.

The protein resides in the cytoplasm. It catalyses the reaction 7-phospho-2-dehydro-3-deoxy-D-arabino-heptonate = 3-dehydroquinate + phosphate. The enzyme catalyses 3-dehydroquinate = 3-dehydroshikimate + H2O. The catalysed reaction is shikimate + NADP(+) = 3-dehydroshikimate + NADPH + H(+). It carries out the reaction shikimate + ATP = 3-phosphoshikimate + ADP + H(+). It catalyses the reaction 3-phosphoshikimate + phosphoenolpyruvate = 5-O-(1-carboxyvinyl)-3-phosphoshikimate + phosphate. Its pathway is metabolic intermediate biosynthesis; chorismate biosynthesis; chorismate from D-erythrose 4-phosphate and phosphoenolpyruvate: step 2/7. It functions in the pathway metabolic intermediate biosynthesis; chorismate biosynthesis; chorismate from D-erythrose 4-phosphate and phosphoenolpyruvate: step 3/7. It participates in metabolic intermediate biosynthesis; chorismate biosynthesis; chorismate from D-erythrose 4-phosphate and phosphoenolpyruvate: step 4/7. The protein operates within metabolic intermediate biosynthesis; chorismate biosynthesis; chorismate from D-erythrose 4-phosphate and phosphoenolpyruvate: step 5/7. Its pathway is metabolic intermediate biosynthesis; chorismate biosynthesis; chorismate from D-erythrose 4-phosphate and phosphoenolpyruvate: step 6/7. The AROM polypeptide catalyzes 5 consecutive enzymatic reactions in prechorismate polyaromatic amino acid biosynthesis. The sequence is that of Pentafunctional AROM polypeptide from Lachancea thermotolerans (strain ATCC 56472 / CBS 6340 / NRRL Y-8284) (Yeast).